The following is a 141-amino-acid chain: Hemoglobin subunit alpha-D (141 aa).

Positions 1–141 (MLNHDEKQLI…VSAVLAEKYR (141 aa)) constitute a Globin domain. The heme b site is built by histidine 58 and histidine 87.

Belongs to the globin family. Heterotetramer of two alpha-D chains and two beta chains. Red blood cells.

In terms of biological role, involved in oxygen transport from the lung to the various peripheral tissues. The sequence is that of Hemoglobin subunit alpha-D (HBAD) from Chrysemys picta bellii (Western painted turtle).